Consider the following 126-residue polypeptide: 13 kDa ribonucleoprotein-associated protein (126 aa).

The protein belongs to the eukaryotic ribosomal protein eL8 family. Component of the U3 snoRNP particle. Binds to the C'/D and B/C motifs in U3 snoRNA. Component of the 25S U4/U6.U5 tri-snRNP particle, a subcomplex of the spliceosome. Binds to the 5' stem-loop of U4 snRNA.

It is found in the nucleus. It localises to the nucleolus. In terms of biological role, common component of the spliceosome and rRNA processing machinery. In association with the spliceosomal U4/U6.U5 tri-snRNP particle, required for splicing of pre-mRNA. In association with box C/D snoRNPs, required for processing of pre-ribosomal RNA (rRNA) and site-specific 2'-O-methylation of substrate RNAs. Essential for the accumulation and stability of U4 snRNA, U6 snRNA, and box C/D snoRNAs. This chain is 13 kDa ribonucleoprotein-associated protein (SNU13), found in Candida albicans (strain SC5314 / ATCC MYA-2876) (Yeast).